A 300-amino-acid polypeptide reads, in one-letter code: Putative lysophosphatidic acid:oleoyl-CoA acyltransferase (300 aa).

Residues 32–52 (WILIVVVMILRVPLCIISVTL) form a helical membrane-spanning segment. Residues 115-120 (HSSPLD) carry the HXXXXD motif motif.

It belongs to the 1-acyl-sn-glycerol-3-phosphate acyltransferase family.

The protein localises to the lipid droplet. Its subcellular location is the endoplasmic reticulum membrane. It is found in the golgi apparatus membrane. The catalysed reaction is a 1-acyl-sn-glycero-3-phosphate + an acyl-CoA = a 1,2-diacyl-sn-glycero-3-phosphate + CoA. Acyl-CoA-dependent lysophosphatidic acid acyltransferase with preference for oleoyl-CoA. Involved in triacylglyceride homeostasis and lipid droplet formation. Involved in vacuolar protein sorting. The polypeptide is Putative lysophosphatidic acid:oleoyl-CoA acyltransferase (vps66) (Schizosaccharomyces pombe (strain 972 / ATCC 24843) (Fission yeast)).